Here is a 214-residue protein sequence, read N- to C-terminus: Galactokinase (214 aa).

Alpha-D-galactose contacts are provided by Arg-47, Asp-53, His-54, and Asp-56. The ATP site is built by Gly-149, Gly-151, Ser-153, and Ser-154. Asp-199 contributes to the alpha-D-galactose binding site. The active-site Proton acceptor is Asp-199.

This sequence belongs to the GHMP kinase family. GalK subfamily.

The catalysed reaction is alpha-D-galactose + ATP = alpha-D-galactose 1-phosphate + ADP + H(+). It participates in carbohydrate metabolism; galactose metabolism. Functionally, galactokinase is a key enzyme in the galactose metabolism where it catalyzes the conversion of alpha-D-galactose to galactose 1-phosphate. Can also induce the transcription of the gal genes in response to the organism being challenged with galactose as the sole source of carbon. In Candida maltosa (Yeast), this protein is Galactokinase.